Consider the following 444-residue polypeptide: 3-isopropylmalate dehydratase large subunit (444 aa).

Residues Xaa348, Cys408, and Xaa411 each coordinate [4Fe-4S] cluster. The disordered stretch occupies residues Glu423–His444.

This sequence belongs to the aconitase/IPM isomerase family. LeuC type 1 subfamily. As to quaternary structure, heterodimer of LeuC and LeuD. It depends on [4Fe-4S] cluster as a cofactor.

The enzyme catalyses (2R,3S)-3-isopropylmalate = (2S)-2-isopropylmalate. It participates in amino-acid biosynthesis; L-leucine biosynthesis; L-leucine from 3-methyl-2-oxobutanoate: step 2/4. Functionally, catalyzes the isomerization between 2-isopropylmalate and 3-isopropylmalate, via the formation of 2-isopropylmaleate. This is 3-isopropylmalate dehydratase large subunit from Buchnera aphidicola subsp. Uroleucon rudbeckiae.